We begin with the raw amino-acid sequence, 363 residues long: MATLRRLREAPRHLLVCEKSNFGNHKSRHRHLVQTHYYNYRVSFLIPECGILSEELKNLVMNTGPYYFVKNLPLHELITPEFISTFIKKGSCYALTYNTHIDEDNTVALLPNGKLILSLDKDTYEETGLQGHPSQFSGRKIMKFIVSIDLMELSLNLDSKKYERISWSFKEKKPLKFDFLLAWHKTGSEESTMMSYFSKYQIQEHQPKVALSTLRDLQCPVLQSSELEGTPEVSCRALELFDWLGAVFSNVDLNNEPNNFISTYCCPEPSTVVAKAYLCTITGFILPEKICLLLEHLCHYFDEPKLAPWVTLSVQGFADSPVSWEKNEHGFRKGGEHLYNFVIFNNQDYWLQMAVGANDHCPP.

Component of nuclear RNase P and RNase MRP ribonucleoproteins. RNase P consists of a catalytic RNA moiety and about 10 protein subunits; POP1, POP4, POP5, POP7, RPP14, RPP21, RPP25, RPP30, RPP38 and RPP40. Within the RNase P complex, POP1, POP7 and RPP25 form the 'finger' subcomplex, POP5, RPP14, RPP40 and homodimeric RPP30 form the 'palm' subcomplex, and RPP21, POP4 and RPP38 form the 'wrist' subcomplex. All subunits of the RNase P complex interact with the catalytic RNA. Several subunits of RNase P are also part of the RNase MRP complex. RNase MRP consists of a catalytic RNA moiety and about 8 protein subunits; POP1, POP7, RPP25, RPP30, RPP38, RPP40 and possibly also POP4 and POP5.

The protein resides in the nucleus. It localises to the nucleolus. In terms of biological role, component of ribonuclease P, a ribonucleoprotein complex that generates mature tRNA molecules by cleaving their 5'-ends. Also a component of the MRP ribonuclease complex, which cleaves pre-rRNA sequences. The chain is Ribonuclease P protein subunit p40 (RPP40) from Homo sapiens (Human).